A 401-amino-acid chain; its full sequence is Chalcone synthase 3 (401 aa).

The active site involves Cys168.

It belongs to the thiolase-like superfamily. Chalcone/stilbene synthases family.

The enzyme catalyses (E)-4-coumaroyl-CoA + 3 malonyl-CoA + 3 H(+) = 2',4,4',6'-tetrahydroxychalcone + 3 CO2 + 4 CoA. The protein operates within secondary metabolite biosynthesis; flavonoid biosynthesis. Functionally, the primary product of this enzyme is 4,2',4',6'-tetrahydroxychalcone (also termed naringenin-chalcone or chalcone) which can under specific conditions spontaneously isomerize into naringenin. This is Chalcone synthase 3 (CHS3) from Sorghum bicolor (Sorghum).